Here is a 98-residue protein sequence, read N- to C-terminus: Co-chaperonin GroES (98 aa).

The protein belongs to the GroES chaperonin family. In terms of assembly, heptamer of 7 subunits arranged in a ring. Interacts with the chaperonin GroEL.

It localises to the cytoplasm. In terms of biological role, together with the chaperonin GroEL, plays an essential role in assisting protein folding. The GroEL-GroES system forms a nano-cage that allows encapsulation of the non-native substrate proteins and provides a physical environment optimized to promote and accelerate protein folding. GroES binds to the apical surface of the GroEL ring, thereby capping the opening of the GroEL channel. This chain is Co-chaperonin GroES, found in Bartonella bacilliformis (strain ATCC 35685 / KC583 / Herrer 020/F12,63).